The primary structure comprises 361 residues: Chorismate synthase (361 aa).

2 residues coordinate NADP(+): arginine 48 and arginine 54. Residues 125-127 (RSS), 238-239 (NA), glycine 278, 293-297 (KPTSS), and arginine 319 contribute to the FMN site.

Belongs to the chorismate synthase family. In terms of assembly, homotetramer. FMNH2 serves as cofactor.

It catalyses the reaction 5-O-(1-carboxyvinyl)-3-phosphoshikimate = chorismate + phosphate. It functions in the pathway metabolic intermediate biosynthesis; chorismate biosynthesis; chorismate from D-erythrose 4-phosphate and phosphoenolpyruvate: step 7/7. Its function is as follows. Catalyzes the anti-1,4-elimination of the C-3 phosphate and the C-6 proR hydrogen from 5-enolpyruvylshikimate-3-phosphate (EPSP) to yield chorismate, which is the branch point compound that serves as the starting substrate for the three terminal pathways of aromatic amino acid biosynthesis. This reaction introduces a second double bond into the aromatic ring system. The polypeptide is Chorismate synthase (Salmonella dublin (strain CT_02021853)).